The sequence spans 149 residues: Transcriptional repressor NrdR (149 aa).

A zinc finger spans residues 3–34 (CPFCSENDTKVIDSRLVADGHQVRRRRQCLAC). Positions 49-139 (PKVIKSNGNR…VYRSFEDIRE (91 aa)) constitute an ATP-cone domain.

Belongs to the NrdR family. Requires Zn(2+) as cofactor.

Negatively regulates transcription of bacterial ribonucleotide reductase nrd genes and operons by binding to NrdR-boxes. This Vibrio parahaemolyticus serotype O3:K6 (strain RIMD 2210633) protein is Transcriptional repressor NrdR.